We begin with the raw amino-acid sequence, 119 residues long: NADH dehydrogenase [ubiquinone] 1 subunit C2 (119 aa).

Residues 56–75 (GLHRQLLYITAFFFAGYYLV) traverse the membrane as a helical segment.

Belongs to the complex I NDUFC2 subunit family. As to quaternary structure, complex I is composed of 45 different subunits. Interacts with TMEM242.

It is found in the mitochondrion inner membrane. Accessory subunit of the mitochondrial membrane respiratory chain NADH dehydrogenase (Complex I), that is believed not to be involved in catalysis but required for the complex assembly. Complex I functions in the transfer of electrons from NADH to the respiratory chain. The immediate electron acceptor for the enzyme is believed to be ubiquinone. This Pongo pygmaeus (Bornean orangutan) protein is NADH dehydrogenase [ubiquinone] 1 subunit C2.